Consider the following 609-residue polypeptide: DNA mismatch repair protein MutL (609 aa).

The segment at 364–386 is disordered; it reads SVNSKPTDYRPAMSPSFKSTPNT.

This sequence belongs to the DNA mismatch repair MutL/HexB family.

This protein is involved in the repair of mismatches in DNA. It is required for dam-dependent methyl-directed DNA mismatch repair. May act as a 'molecular matchmaker', a protein that promotes the formation of a stable complex between two or more DNA-binding proteins in an ATP-dependent manner without itself being part of a final effector complex. This is DNA mismatch repair protein MutL from Rickettsia akari (strain Hartford).